The sequence spans 461 residues: MSTAGVAAQDIRVPLKTGFLHNGQALGNMKSCWGSHSEFENNFLNIDPITMAYNLNSPAQEHLTTVGCAARSAPGSGHFFAECGPSPRSSLPPLVISPSESSGQREEDQVMCGFKKLSVNGVCTSTPPLTPIKSCPSPFPCAALCDRGSRPLPPLPISEDLCVDEADSEVELLTTSSDTDLLLEDSAPSDFKYDAPGRRSFRGCGQINYAYFDSPTVSVADLSCASDQNRVVPDPNPPPPQSHRRLRRSHSGPAGSFNKPAIRISSCTHRASPSSDEDKPEVPPRVPIPPRPAKPDYRRWSAEVTSNTYSDEDRPPKVPPREPLSRSNSRTPSPKSLPSYLNGVMPPTQSFAPDPKYVSSKALQRQSSEGSANKVPCILPIIENGKKVSSTHYYLLPERPPYLDKYEKYFKEAEETNPSTQIQPLPAACGMASATEKLASRMKIDMGSHGKRKHLSYVVSP.

N-acetylserine is present on Ser2. Phosphothreonine is present on residues Thr126 and Thr130. The interval 228 to 353 (QNRVVPDPNP…VMPPTQSFAP (126 aa)) is disordered. Ser251 and Ser272 each carry phosphoserine. The segment covering 265–274 (SSCTHRASPS) has biased composition (polar residues). Positions 283-292 (PPRVPIPPRP) are enriched in pro residues. Position 301 is a phosphoserine (Ser301). The segment covering 311-324 (DEDRPPKVPPREPL) has biased composition (basic and acidic residues). Residues 325–336 (SRSNSRTPSPKS) are compositionally biased toward polar residues. Residues 333 to 362 (SPKSLPSYLNGVMPPTQSFAPDPKYVSSKA) form an interaction with EGFR and ERBB2 and regulation of EGFR activation region. Ser460 bears the Phosphoserine mark.

Belongs to the MIG6 family. In terms of assembly, interacts with EGFR. Interacts with ERBB2. As to expression, detected in lung, in airway epithelial cells and alveolar type 2 cells (at protein level). Detected in uterus stroma, luminal epithelium and glandular epithelium.

The protein resides in the cytoplasm. Its subcellular location is the cell membrane. The protein localises to the nucleus. Its function is as follows. Negative regulator of EGFR signaling in skin morphogenesis. Acts as a negative regulator for several EGFR family members, including ERBB2, ERBB3 and ERBB4. Inhibits EGFR catalytic activity by interfering with its dimerization. Inhibits autophosphorylation of EGFR, ERBB2 and ERBB4. Important for normal keratinocyte proliferation and differentiation. Plays a role in modulating the response to steroid hormones in the uterus. Required for normal response to progesterone in the uterus and for fertility. Mediates epithelial estrogen responses in the uterus by regulating ESR1 levels and activation. Important for regulation of endometrium cell proliferation. Important for normal prenatal and perinatal lung development. This chain is ERBB receptor feedback inhibitor 1 (Errfi1), found in Mus musculus (Mouse).